The primary structure comprises 647 residues: LIM domain kinase 1 (647 aa).

2 consecutive LIM zinc-binding domains span residues 25–75 and 84–137; these read CASC…CKKD and CHGC…CGQC. Residues 165 to 258 form the PDZ domain; it reads LVSIPASAHG…LLQLTLEHDP (94 aa). The residue at position 210 (Ser210) is a Phosphoserine. Position 229 is a phosphothreonine (Thr229). Positions 256 to 319 are disordered; that stretch reads HDPHDSLGHG…SPASQRKDLG (64 aa). Positions 266-277 are enriched in low complexity; it reads PVSDPSPLSSPV. Polar residues-rich tracts occupy residues 278-289 and 298-313; these read HTPSGQAASSAR and SIDT…SPAS. Ser298, Ser302, Ser307, and Ser310 each carry phosphoserine. Residue Ser323 is modified to Phosphoserine; by MAPKAPK2. Ser337 carries the post-translational modification Phosphoserine. Positions 339-604 constitute a Protein kinase domain; that stretch reads LIHGEVLGKG…PSFVKLEQWL (266 aa). ATP contacts are provided by residues 345–353 and Lys368; that span reads LGKGCFGQA. Asp460 is a catalytic residue. Residue Thr508 is modified to Phosphothreonine; by ROCK1.

This sequence belongs to the protein kinase superfamily. TKL Ser/Thr protein kinase family. In terms of assembly, self-associates to form homodimers. Interacts with HSP90AA1; this interaction promotes LIMK1 dimerization and subsequent transphosphorylation. Interacts with CDKN1C. Interacts (via LIM domain) with the cytoplasmic domain of NRG1. Interacts with NISCH. Interacts with SSH1. Interacts with RLIM and RNF6. Interacts (via LIM zinc-binding domains) with FAM89B/LRAP25 (via LRR repeat). Forms a tripartite complex with CDC42BPA, CDC42BPB and FAM89B/LRAP25. In terms of processing, autophosphorylated. Phosphorylated on Thr-508 by ROCK1 and PAK1, resulting in activation. Phosphorylated by PAK4 which increases the ability of LIMK1 to phosphorylate cofilin. Phosphorylated at Ser-323 by MAPKAPK2 during activation of VEGFA-induced signaling, which results in activation of LIMK1 and promotion of actin reorganization, cell migration, and tubule formation of endothelial cells. Dephosphorylated and inactivated by SSH1. Phosphorylated by CDC42BP. Post-translationally, ubiquitinated. 'Lys-48'-linked polyubiquitination by RNF6 leads to proteasomal degradation through the 26S proteasome, modulating LIMK1 levels in the growth cone and its effect on axonal outgrowth. Also polyubiquitinated by RLIM. Highest expression in the nervous system, particularly in the spinal cord and the cranial nerve and dorsal root ganglia.

It is found in the cytoplasm. It localises to the nucleus. Its subcellular location is the cytoskeleton. The protein resides in the cell projection. The protein localises to the lamellipodium. The catalysed reaction is L-seryl-[protein] + ATP = O-phospho-L-seryl-[protein] + ADP + H(+). It catalyses the reaction L-threonyl-[protein] + ATP = O-phospho-L-threonyl-[protein] + ADP + H(+). Its function is as follows. Serine/threonine-protein kinase that plays an essential role in the regulation of actin filament dynamics. Acts downstream of several Rho family GTPase signal transduction pathways. Activated by upstream kinases including ROCK1, PAK1 and PAK4, which phosphorylate LIMK1 on a threonine residue located in its activation loop. LIMK1 subsequently phosphorylates and inactivates the actin binding/depolymerizing factors cofilin-1/CFL1, cofilin-2/CFL2 and destrin/DSTN, thereby preventing the cleavage of filamentous actin (F-actin), and stabilizing the actin cytoskeleton. In this way LIMK1 regulates several actin-dependent biological processes including cell motility, cell cycle progression, and differentiation. Phosphorylates TPPP on serine residues, thereby promoting microtubule disassembly. Stimulates axonal outgrowth and may be involved in brain development. This is LIM domain kinase 1 (Limk1) from Mus musculus (Mouse).